Reading from the N-terminus, the 472-residue chain is Aspartyl/glutamyl-tRNA(Asn/Gln) amidotransferase subunit B (472 aa).

This sequence belongs to the GatB/GatE family. GatB subfamily. As to quaternary structure, heterotrimer of A, B and C subunits.

It carries out the reaction L-glutamyl-tRNA(Gln) + L-glutamine + ATP + H2O = L-glutaminyl-tRNA(Gln) + L-glutamate + ADP + phosphate + H(+). The catalysed reaction is L-aspartyl-tRNA(Asn) + L-glutamine + ATP + H2O = L-asparaginyl-tRNA(Asn) + L-glutamate + ADP + phosphate + 2 H(+). Functionally, allows the formation of correctly charged Asn-tRNA(Asn) or Gln-tRNA(Gln) through the transamidation of misacylated Asp-tRNA(Asn) or Glu-tRNA(Gln) in organisms which lack either or both of asparaginyl-tRNA or glutaminyl-tRNA synthetases. The reaction takes place in the presence of glutamine and ATP through an activated phospho-Asp-tRNA(Asn) or phospho-Glu-tRNA(Gln). In Sulfolobus acidocaldarius (strain ATCC 33909 / DSM 639 / JCM 8929 / NBRC 15157 / NCIMB 11770), this protein is Aspartyl/glutamyl-tRNA(Asn/Gln) amidotransferase subunit B.